The following is a 250-amino-acid chain: tRNA:m(4)X modification enzyme TRM13 (250 aa).

Positions 1 to 10 are enriched in basic residues; that stretch reads MGRAPAKRKP. The segment at 1–20 is disordered; that stretch reads MGRAPAKRKPSSPPPPPPPG. Over residues 11 to 20 the composition is skewed to pro residues; sequence SSPPPPPPPG. The CHHC U11-48K-type zinc finger occupies 62-89; the sequence is LVPCPVDPSHTVLEENLEAHVGKCPLKK. Positions 65, 71, 81, and 85 each coordinate Zn(2+).

Belongs to the methyltransferase TRM13 family.

The protein localises to the nucleus. Its subcellular location is the cytoplasm. It catalyses the reaction cytidine(4) in tRNA(Pro) + S-adenosyl-L-methionine = 2'-O-methylcytidine(4) in tRNA(Pro) + S-adenosyl-L-homocysteine + H(+). The catalysed reaction is cytidine(4) in tRNA(Gly)(GCC) + S-adenosyl-L-methionine = 2'-O-methylcytidine(4) in tRNA(Gly)(GCC) + S-adenosyl-L-homocysteine + H(+). It carries out the reaction adenosine(4) in tRNA(His) + S-adenosyl-L-methionine = 2'-O-methyladenosine(4) in tRNA(His) + S-adenosyl-L-homocysteine + H(+). TRNA methylase that catalyzes 2'-O-methyladenosine (Am) nucleoside formation on tRNA(Gly)(GCC) in vitro. May 2'-O-methylate cytidine(4) in tRNA(Pro) and tRNA(Gly)(GCC), and adenosine(4) in tRNA(His). Involved in salt stress tolerance. This is tRNA:m(4)X modification enzyme TRM13 from Oryza sativa subsp. japonica (Rice).